The following is a 130-amino-acid chain: Sulfurtransferase TusD (130 aa).

Cys80 functions as the Cysteine persulfide intermediate in the catalytic mechanism.

The protein belongs to the DsrE/TusD family. In terms of assembly, heterohexamer, formed by a dimer of trimers. The hexameric TusBCD complex contains 2 copies each of TusB, TusC and TusD. The TusBCD complex interacts with TusE.

Its subcellular location is the cytoplasm. Functionally, part of a sulfur-relay system required for 2-thiolation of 5-methylaminomethyl-2-thiouridine (mnm(5)s(2)U) at tRNA wobble positions. Accepts sulfur from TusA and transfers it in turn to TusE. This chain is Sulfurtransferase TusD, found in Sodalis glossinidius (strain morsitans).